The sequence spans 184 residues: MTNYNGLIVITGPSGVGKGTLVKKLLLENPEIWLSISATTRTPREGEINGKDYFFLNKKEFIDLVDKEGFLEWAEFAGNFYGTPRAQAQEKISVGKKVLLEIELDGARQVRKTFPEGFQIFIAPPSFEELEKRIRTRGTDSELAIQSRLNRAKEELLAKNEFDAIVINDQLDIALLEIKKLIKS.

The region spanning 5–183 is the Guanylate kinase-like domain; that stretch reads NGLIVITGPS…ALLEIKKLIK (179 aa). 12-19 lines the ATP pocket; it reads GPSGVGKG.

This sequence belongs to the guanylate kinase family.

The protein localises to the cytoplasm. It carries out the reaction GMP + ATP = GDP + ADP. Its function is as follows. Essential for recycling GMP and indirectly, cGMP. This is Guanylate kinase from Prochlorococcus marinus (strain SARG / CCMP1375 / SS120).